The primary structure comprises 567 residues: Urease subunit alpha (567 aa).

Positions 128–567 (GGIDPHIHFI…LPLAQLYHLF (440 aa)) constitute a Urease domain. The Ni(2+) site is built by histidine 133, histidine 135, and lysine 216. An N6-carboxylysine modification is found at lysine 216. Histidine 218 contributes to the substrate binding site. Positions 245 and 271 each coordinate Ni(2+). Catalysis depends on histidine 319, which acts as the Proton donor. Residue aspartate 359 coordinates Ni(2+).

This sequence belongs to the metallo-dependent hydrolases superfamily. Urease alpha subunit family. In terms of assembly, heterotrimer of UreA (gamma), UreB (beta) and UreC (alpha) subunits. Three heterotrimers associate to form the active enzyme. The cofactor is Ni cation. Post-translationally, carboxylation allows a single lysine to coordinate two nickel ions.

The protein localises to the cytoplasm. The enzyme catalyses urea + 2 H2O + H(+) = hydrogencarbonate + 2 NH4(+). Its pathway is nitrogen metabolism; urea degradation; CO(2) and NH(3) from urea (urease route): step 1/1. This is Urease subunit alpha from Marinobacter nauticus (strain ATCC 700491 / DSM 11845 / VT8) (Marinobacter aquaeolei).